The primary structure comprises 140 residues: MAIQRTFSILKPDATERNITGAINALIEKAGLRIVAQKRIHMTRGQAETFYAVHKERPFFGELVDFMISGPVVVQVLEGENAIAKYRDVMGATDPSKAADGTIRKAHAKSIGENSVHGSDAPETAAIEIAQFFAGNEIVG.

ATP is bound by residues Lys-11, Phe-59, Arg-87, Thr-93, Arg-104, and Asn-114. The active-site Pros-phosphohistidine intermediate is the His-117.

This sequence belongs to the NDK family. As to quaternary structure, homotetramer. Requires Mg(2+) as cofactor.

It localises to the cytoplasm. It carries out the reaction a 2'-deoxyribonucleoside 5'-diphosphate + ATP = a 2'-deoxyribonucleoside 5'-triphosphate + ADP. The catalysed reaction is a ribonucleoside 5'-diphosphate + ATP = a ribonucleoside 5'-triphosphate + ADP. Functionally, major role in the synthesis of nucleoside triphosphates other than ATP. The ATP gamma phosphate is transferred to the NDP beta phosphate via a ping-pong mechanism, using a phosphorylated active-site intermediate. The polypeptide is Nucleoside diphosphate kinase (Rhodopseudomonas palustris (strain BisB5)).